A 71-amino-acid polypeptide reads, in one-letter code: DNA-directed RNA polymerase subunit epsilon (71 aa).

The protein belongs to the RNA polymerase subunit epsilon family. RNAP is composed of a core of 2 alpha, a beta and a beta' subunit. The core is associated with a delta subunit, and at least one of epsilon or omega. When a sigma factor is associated with the core the holoenzyme is formed, which can initiate transcription.

It carries out the reaction RNA(n) + a ribonucleoside 5'-triphosphate = RNA(n+1) + diphosphate. In terms of biological role, a non-essential component of RNA polymerase (RNAP). The protein is DNA-directed RNA polymerase subunit epsilon of Staphylococcus saprophyticus subsp. saprophyticus (strain ATCC 15305 / DSM 20229 / NCIMB 8711 / NCTC 7292 / S-41).